We begin with the raw amino-acid sequence, 477 residues long: MSAARFAARSFLSRRLAATVPAAAPAASTPAASTCPAAQQQQSQFHSSAHLEARRRSRFKNVRAVEMGLTSDAKIESFTKKKFAEYTEDEKAALAHNYPAEHMEAIEAAEAAIDPKDLTIQGRLRVDPYRMPYIDDFSEIQPIIDKRARRSAPPSHKARFMDVDEFTQDLINWADEIRRGEPTHRMKKLRDFVPEEFFEKPEGQWPKDVRDEAFTKFWAYLKEQKDADAKAAANATGPTDGDILSYILERSSMTDNNLQANSSLAPALPDKVPGVEGKYRNAIDPADDGLDDKGQYQELKKRTGMSVRQILQLKTKKLVHRRVVNQTRLGKIASDSVMVIAGNGDGWLGLGMAKSVEASIAVEKATLLAIQNMQPIPRYENRTIYGEVTTKVSGTIVRLNSRPPGFGLRVSHRIFEMCRAAGIRDLSAKFLRSRNPMNTVKATYQALLSQPNPEDLAIGRGKKLVDVRKVYYGGSVY.

It belongs to the universal ribosomal protein uS5 family. Component of the mitochondrial small ribosomal subunit (mt-SSU). Mature N.crassa 74S mitochondrial ribosomes consist of a small (37S) and a large (54S) subunit. The 37S small subunit contains a 16S ribosomal RNA (16S mt-rRNA) and 32 different proteins. The 54S large subunit contains a 23S rRNA (23S mt-rRNA) and 42 different proteins. uS3m, uS4m and uS5m form the narrow entry site of the mRNA channel.

It localises to the mitochondrion. In terms of biological role, component of the mitochondrial ribosome (mitoribosome), a dedicated translation machinery responsible for the synthesis of mitochondrial genome-encoded proteins, including at least some of the essential transmembrane subunits of the mitochondrial respiratory chain. The mitoribosomes are attached to the mitochondrial inner membrane and translation products are cotranslationally integrated into the membrane. This chain is Small ribosomal subunit protein uS5m (mrps5), found in Neurospora crassa (strain ATCC 24698 / 74-OR23-1A / CBS 708.71 / DSM 1257 / FGSC 987).